The sequence spans 1563 residues: NACHT domain- and WD repeat-containing protein 1 (1563 aa).

Residues 274–314 form a WD 1 repeat; sequence TNHQVLEQLRELELARQELGWLYQEIRHHLWQSTESTKVFC. An NACHT domain is found at 336 to 666; that stretch reads TPLVLFGPPG…HRQLSQVIQV (331 aa). An ATP-binding site is contributed by 342-349; the sequence is GPPGIGKT. WD repeat units lie at residues 866 to 905, 908 to 947, 954 to 994, 998 to 1037, 1044 to 1082, 1126 to 1165, 1168 to 1207, 1212 to 1251, 1253 to 1292, 1346 to 1385, 1386 to 1425, and 1431 to 1470; these read GCHKGITAIAWSLEEKLLVVGTQDGAMVVWDVEEQQVVHV, GHTAEVKCVRVFAQGTLAISASKDHTLRLWSLLSGQEKVT, QNPT…LVFC, DVSDPWVCVALLAAQGLLLALSKGGQVSLWSSAMGKLQEK, KEETPTCAVSIQSRARLVAGFSSGSIALVSAGEDRLLEK, EHEDMVETAVLGPENNLIITGSRDALIQVWSLSEQGTLLN, EGVGAPVSLLVRGGTLVVSASRKSSSFKVWDLKSTKKLQS, LDRTGLAAVSHHGSFVYFPKVGDKNKVTIWDLAEGEEQDC, DTSNEVRCLEVAEQAKLLFTGLVSGIVLVFPLNSRQDVLC, QLPETIVSVAVLADYRVVYGMSDGSLFLYDCACSKVFPLE, AHGSRVSCVEVSHSEQLAVSGAEDALLCLWDLQACRGMFE, and SCCRGVRCACFSRDDKHVFAGMEDRSVTAWSTVDGTLLAV. The tract at residues 1534 to 1563 is disordered; that stretch reads AAEASQDAEPVAVEGKESKSNKRSQVCLIL.

In terms of assembly, may interact with HSP90AA1, HSP90AB1 and BAG2.

The protein localises to the cytoplasm. Its subcellular location is the cytosol. Its function is as follows. May play a role in the control of androgen receptor (AR) protein steady-state levels. This chain is NACHT domain- and WD repeat-containing protein 1 (Nwd1), found in Mus musculus (Mouse).